The primary structure comprises 86 residues: Anti-adapter protein IraP (86 aa).

Residues 1-38 are a coiled coil; the sequence is MKNLIAELLVKLAQKEEEAKELTVQVEALEIVVTALLR.

This sequence belongs to the IraP family. In terms of assembly, interacts with RssB.

The protein localises to the cytoplasm. In terms of biological role, inhibits RpoS proteolysis by regulating RssB activity, thereby increasing the stability of the sigma stress factor RpoS especially during phosphate starvation, but also in stationary phase and during nitrogen starvation. Its effect on RpoS stability is due to its interaction with RssB, which probably blocks the interaction of RssB with RpoS, and the consequent delivery of the RssB-RpoS complex to the ClpXP protein degradation pathway. This is Anti-adapter protein IraP from Klebsiella pneumoniae (strain 342).